The sequence spans 35 residues: Mu-theraphotoxin-Pm1a (35 aa).

3 disulfides stabilise this stretch: C3–C17, C10–C22, and C16–C29. At F35 the chain carries Phenylalanine amide.

This sequence belongs to the neurotoxin 10 (Hwtx-1) family. 62 (Vatx) subfamily. As to expression, expressed by the venom gland.

The protein localises to the secreted. Functionally, gating-modifier toxin with weak activity on Nav1.7/SCN9A and Nav1.8/SCN10A. Inhibits Nav1.7/SCN9A peak current (IC(50)=334 nM) and shifts the voltage dependence of activation to more depolarised membrane potentials. Shows 21% peak current inhibition (at 10 uM) on Nav1.8/SCN10A sodium channels. This chain is Mu-theraphotoxin-Pm1a, found in Poecilotheria metallica (Metallic blue ornamental tree spider).